Here is a 522-residue protein sequence, read N- to C-terminus: Ribonuclease Y (522 aa).

The chain crosses the membrane as a helical span at residues 7–27 (STILYCLFFFFLGIAAVLAFI). One can recognise a KH domain in the interval 212-272 (TTSTVGVPTD…VRREVARMSL (61 aa)). The HD domain occupies 338-431 (VLRHSVEVAF…VATADACSAS (94 aa)).

Belongs to the RNase Y family.

It is found in the cell membrane. In terms of biological role, endoribonuclease that initiates mRNA decay. In Rhodopirellula baltica (strain DSM 10527 / NCIMB 13988 / SH1), this protein is Ribonuclease Y.